A 1179-amino-acid polypeptide reads, in one-letter code: ATP-dependent helicase/deoxyribonuclease subunit B (1179 aa).

This sequence belongs to the helicase family. AddB/RexB type 2 subfamily. As to quaternary structure, heterodimer of AddA and RexB. The cofactor is Mg(2+).

In terms of biological role, the heterodimer acts as both an ATP-dependent DNA helicase and an ATP-dependent, dual-direction single-stranded exonuclease. Recognizes the chi site generating a DNA molecule suitable for the initiation of homologous recombination. This subunit has 5' -&gt; 3' nuclease activity but not helicase activity. The sequence is that of ATP-dependent helicase/deoxyribonuclease subunit B from Lactobacillus delbrueckii subsp. bulgaricus (strain ATCC 11842 / DSM 20081 / BCRC 10696 / JCM 1002 / NBRC 13953 / NCIMB 11778 / NCTC 12712 / WDCM 00102 / Lb 14).